Reading from the N-terminus, the 104-residue chain is MKREAFKMYLKPGYEAEYEKRHAAIWPELKALLSKNGVSDYSIYWDKETNILFAFQKTEGEGGSQDLGNTEIVQKWWDYMADIMEVNPDNSPVSIPLPEVFHMD.

A substrate-binding site is contributed by Tyr-18. The Proton donor role is filled by His-22. Substrate-binding positions include Tyr-41 and 76 to 77; that span reads WW.

The protein belongs to the rhamnose mutarotase family. As to quaternary structure, homodimer.

The protein localises to the cytoplasm. It catalyses the reaction alpha-L-rhamnose = beta-L-rhamnose. The protein operates within carbohydrate metabolism; L-rhamnose metabolism. Its function is as follows. Involved in the anomeric conversion of L-rhamnose. The sequence is that of L-rhamnose mutarotase from Bacteroides thetaiotaomicron (strain ATCC 29148 / DSM 2079 / JCM 5827 / CCUG 10774 / NCTC 10582 / VPI-5482 / E50).